We begin with the raw amino-acid sequence, 237 residues long: Class B acid phosphatase (237 aa).

Residues 1 to 25 (MRKITLALSAACLLFSLNNAVVARA) form the signal peptide. Asp69 functions as the Nucleophile in the catalytic mechanism. Mg(2+) contacts are provided by Asp69 and Asp71. Asp71 serves as the catalytic Proton donor. Substrate is bound by residues 137–138 (TG) and Lys177. Position 192 (Asp192) interacts with Mg(2+).

The protein belongs to the class B bacterial acid phosphatase family. As to quaternary structure, homotetramer. Mg(2+) is required as a cofactor.

It is found in the periplasm. It carries out the reaction a phosphate monoester + H2O = an alcohol + phosphate. In terms of biological role, dephosphorylates several organic phosphate monoesters. Also has a phosphotransferase activity catalyzing the transfer of low-energy phosphate groups from organic phosphate monoesters to free hydroxyl groups of various organic compounds. The chain is Class B acid phosphatase from Enterobacter sp. (strain 638).